The following is a 271-amino-acid chain: Transmembrane protein 33 homolog (271 aa).

Residues 1–32 (MVEIVEEPDDHQSSSTGAGSSGSSSAPPPPPP) are disordered. The span at 13–25 (SSSTGAGSSGSSS) shows a compositional bias: low complexity. Helical transmembrane passes span 56 to 76 (VLTVFFALNYMIPFIGLVPAH), 125 to 145 (VVFLMAAPVSMAALPVTIYAA), and 180 to 200 (ALGIIACSEIFLVPLLVSLIF).

The protein belongs to the PER33/POM33 family.

It localises to the membrane. This is Transmembrane protein 33 homolog from Caenorhabditis elegans.